Here is a 514-residue protein sequence, read N- to C-terminus: Na(+)/H(+) antiporter NhaB (514 aa).

Helical transmembrane passes span Leu-23–Ala-43, Pro-63–Ala-83, Leu-97–Phe-117, Leu-120–Phe-140, Phe-144–Ile-164, Leu-202–Pro-222, Phe-238–Met-258, Ala-303–Ile-323, Leu-357–Ile-377, Leu-391–Ile-411, Ala-447–Ile-467, and Val-475–Phe-495.

It belongs to the NhaB Na(+)/H(+) (TC 2.A.34) antiporter family.

It is found in the cell inner membrane. It carries out the reaction 2 Na(+)(in) + 3 H(+)(out) = 2 Na(+)(out) + 3 H(+)(in). Functionally, na(+)/H(+) antiporter that extrudes sodium in exchange for external protons. In Salmonella gallinarum (strain 287/91 / NCTC 13346), this protein is Na(+)/H(+) antiporter NhaB.